The chain runs to 254 residues: NAD kinase (254 aa).

D44 serves as the catalytic Proton acceptor. Residues 44 to 45 (DG), 114 to 115 (NE), D144, A152, 155 to 160 (TAYNYS), and A179 contribute to the NAD(+) site.

This sequence belongs to the NAD kinase family. A divalent metal cation is required as a cofactor.

It localises to the cytoplasm. The catalysed reaction is NAD(+) + ATP = ADP + NADP(+) + H(+). Its function is as follows. Involved in the regulation of the intracellular balance of NAD and NADP, and is a key enzyme in the biosynthesis of NADP. Catalyzes specifically the phosphorylation on 2'-hydroxyl of the adenosine moiety of NAD to yield NADP. The chain is NAD kinase from Cereibacter sphaeroides (strain ATCC 17029 / ATH 2.4.9) (Rhodobacter sphaeroides).